Reading from the N-terminus, the 746-residue chain is Exostosin-1 (746 aa).

The Cytoplasmic segment spans residues 1-7 (MQAKKRY). A helical; Signal-anchor for type II membrane protein membrane pass occupies residues 8–28 (FILLSAGSCLALLFYFGGLQF). Residues 29 to 746 (RASRSHSRRE…RKKYRDIERL (718 aa)) are Lumenal-facing. Asn-89 carries N-linked (GlcNAc...) asparagine glycosylation. 2 cysteine pairs are disulfide-bonded: Cys-98–Cys-103 and Cys-109–Cys-152. Residues Leu-166 and Tyr-203 each contribute to the a protein site. The UDP site is built by Lys-267, Lys-269, Tyr-271, and Arg-280. A disulfide bond links Cys-298 and Cys-312. Residue His-300 coordinates a protein. Positions 319 and 324 each coordinate UDP. An N-linked (GlcNAc...) asparagine glycan is attached at Asn-330. Disulfide bonds link Cys-334/Cys-355 and Cys-652/Cys-704. Residues Arg-346 and Glu-349 each contribute to the UDP site.

Belongs to the glycosyltransferase 47 family. Part of the heparan sulfate polymerase, a dimeric complex composed of EXT1 and EXT2. Could also form homooligomeric complexes. Interacts with NDST1. Post-translationally, N-glycosylated.

The protein localises to the golgi apparatus membrane. It is found in the golgi apparatus. Its subcellular location is the cis-Golgi network membrane. It localises to the endoplasmic reticulum membrane. It carries out the reaction 3-O-{alpha-D-GlcNAc-[(1-&gt;4)-beta-D-GlcA-(1-&gt;4)-alpha-D-GlcNAc](n)-(1-&gt;4)-beta-D-GlcA-(1-&gt;3)-beta-D-Gal-(1-&gt;3)-beta-D-Gal-(1-&gt;4)-beta-D-Xyl}-L-seryl-[protein] + UDP-alpha-D-glucuronate = 3-O-{[(1-&gt;4)-beta-D-GlcA-(1-&gt;4)-alpha-D-GlcNAc](n+1)-(1-&gt;4)-beta-D-GlcA-(1-&gt;3)-beta-D-Gal-(1-&gt;3)-beta-D-Gal-(1-&gt;4)-beta-D-Xyl}-L-seryl-[protein] + UDP + H(+). Its pathway is protein modification; protein glycosylation. Glycosyltransferase forming with EXT2 the heterodimeric heparan sulfate polymerase which catalyzes the elongation of the heparan sulfate glycan backbone. Glycan backbone extension consists in the alternating transfer of (1-&gt;4)-beta-D-GlcA and (1-&gt;4)-alpha-D-GlcNAc residues from their respective UDP-sugar donors. Both EXT1 and EXT2 are required for the full activity of the polymerase since EXT1 bears the N-acetylglucosaminyl-proteoglycan 4-beta-glucuronosyltransferase activity within the complex while EXT2 carries the glucuronosyl-N-acetylglucosaminyl-proteoglycan 4-alpha-N-acetylglucosaminyltransferase activity. Heparan sulfate proteoglycans are ubiquitous components of the extracellular matrix and play an important role in tissue homeostasis and signaling. In Pongo abelii (Sumatran orangutan), this protein is Exostosin-1 (EXT1).